We begin with the raw amino-acid sequence, 280 residues long: DegV domain-containing protein M6_Spy1440 (280 aa).

Residues 3 to 280 (WKIVTDSGCD…DGGLLMGYEI (278 aa)) enclose the DegV domain. S63 and S91 together coordinate hexadecanoate.

In terms of biological role, may bind long-chain fatty acids, such as palmitate, and may play a role in lipid transport or fatty acid metabolism. This Streptococcus pyogenes serotype M6 (strain ATCC BAA-946 / MGAS10394) protein is DegV domain-containing protein M6_Spy1440.